We begin with the raw amino-acid sequence, 142 residues long: Large ribosomal subunit protein uL13 (142 aa).

This sequence belongs to the universal ribosomal protein uL13 family. Part of the 50S ribosomal subunit.

In terms of biological role, this protein is one of the early assembly proteins of the 50S ribosomal subunit, although it is not seen to bind rRNA by itself. It is important during the early stages of 50S assembly. The protein is Large ribosomal subunit protein uL13 of Klebsiella pneumoniae (strain 342).